The following is a 448-amino-acid chain: Signal recognition particle 54 kDa protein (448 aa).

GTP contacts are provided by residues 107-114 (GIQGSGKT), 189-193 (DTAGR), and 247-250 (TKLD).

The protein belongs to the GTP-binding SRP family. SRP54 subfamily. In terms of assembly, part of the signal recognition particle protein translocation system, which is composed of SRP and FtsY. Archaeal SRP consists of a 7S RNA molecule of 300 nucleotides and two protein subunits: SRP54 and SRP19.

It localises to the cytoplasm. The enzyme catalyses GTP + H2O = GDP + phosphate + H(+). Involved in targeting and insertion of nascent membrane proteins into the cytoplasmic membrane. Binds to the hydrophobic signal sequence of the ribosome-nascent chain (RNC) as it emerges from the ribosomes. The SRP-RNC complex is then targeted to the cytoplasmic membrane where it interacts with the SRP receptor FtsY. In Thermococcus gammatolerans (strain DSM 15229 / JCM 11827 / EJ3), this protein is Signal recognition particle 54 kDa protein.